A 125-amino-acid polypeptide reads, in one-letter code: Apolipoprotein C-IV (125 aa).

An N-terminal signal peptide occupies residues Met1–Cys27.

This sequence belongs to the apolipoprotein C4 family.

The protein localises to the secreted. May participate in lipoprotein metabolism. This Ateles geoffroyi (Black-handed spider monkey) protein is Apolipoprotein C-IV (APOC4).